Consider the following 81-residue polypeptide: Dermaseptin-B7 (81 aa).

A signal peptide spans 1 to 22 (MASLKKSLFLVLFLGLVSLSIC). The propeptide occupies 23–44 (EEEKRENEDEEEQEDDEQSEMK). The interval 24–48 (EEKRENEDEEEQEDDEQSEMKRGLW) is disordered. The span at 30-40 (EDEEEQEDDEQ) shows a compositional bias: acidic residues. Val-78 carries the valine amide modification. Positions 80–81 (EQ) are excised as a propeptide.

Belongs to the frog skin active peptide (FSAP) family. Dermaseptin subfamily. In terms of tissue distribution, expressed by the skin glands.

It is found in the secreted. Its function is as follows. Has antimicrobial activity. The chain is Dermaseptin-B7 (DRG1) from Phyllomedusa bicolor (Two-colored leaf frog).